The primary structure comprises 274 residues: Putative pyruvate, phosphate dikinase regulatory protein (274 aa).

Gly149–Thr156 provides a ligand contact to ADP.

The protein belongs to the pyruvate, phosphate/water dikinase regulatory protein family. PDRP subfamily.

The enzyme catalyses N(tele)-phospho-L-histidyl/L-threonyl-[pyruvate, phosphate dikinase] + ADP = N(tele)-phospho-L-histidyl/O-phospho-L-threonyl-[pyruvate, phosphate dikinase] + AMP + H(+). It catalyses the reaction N(tele)-phospho-L-histidyl/O-phospho-L-threonyl-[pyruvate, phosphate dikinase] + phosphate + H(+) = N(tele)-phospho-L-histidyl/L-threonyl-[pyruvate, phosphate dikinase] + diphosphate. Bifunctional serine/threonine kinase and phosphorylase involved in the regulation of the pyruvate, phosphate dikinase (PPDK) by catalyzing its phosphorylation/dephosphorylation. The protein is Putative pyruvate, phosphate dikinase regulatory protein of Rhizorhabdus wittichii (strain DSM 6014 / CCUG 31198 / JCM 15750 / NBRC 105917 / EY 4224 / RW1) (Sphingomonas wittichii).